A 175-amino-acid chain; its full sequence is uncharacterized protein (175 aa).

A mitochondrion-targeting transit peptide spans 1–11; the sequence is METWRKGSFRN. A disordered region spans residues 24-92; the sequence is RRLRRQSSVL…PRLYRESSSC (69 aa). Residues 41–63 are compositionally biased toward basic and acidic residues; that stretch reads GDHEEYSNREVIRELQGRPDGRR.

Its subcellular location is the mitochondrion. This is an uncharacterized protein from Homo sapiens (Human).